The sequence spans 762 residues: ATP-dependent RNA helicase SUV3 homolog, mitochondrial (762 aa).

Residues 1 to 36 (MQNTRRCISLICVTRQPPSLRATYGAVAAARCLHRA) constitute a mitochondrion transit peptide. One can recognise a Helicase ATP-binding domain in the interval 181-321 (NARALTRKIV…ALELLQKICE (141 aa)). Position 194–201 (194–201 (GPTNSGKT)) interacts with ATP. Positions 331–508 (RYDRLTELTV…PTADQIELYA (178 aa)) constitute a Helicase C-terminal domain. Residues 716-762 (EWDAQQVGQAAAASTSSKESQESPPDDSDDEDSYPGSYKKTRRKRRK) are disordered. Positions 721-730 (QVGQAAAAST) are enriched in polar residues. The segment covering 739–748 (PPDDSDDEDS) has biased composition (acidic residues).

It belongs to the helicase family. It depends on Mg(2+) as a cofactor. Requires Mn(2+) as cofactor.

The protein localises to the mitochondrion. It carries out the reaction ATP + H2O = ADP + phosphate + H(+). Functionally, major helicase player in mitochondrial RNA metabolism and maintenance. Likely component of the mitochondrial degradosome (mtEXO) complex, that degrades 3' overhang double-stranded RNA with a 3'-to-5' directionality in an ATP-dependent manner. ATPase and ATP-dependent multisubstrate helicase, able to unwind double-stranded (ds) DNA and RNA, and RNA/DNA heteroduplexes in the 5'-to-3' direction. Regulates mRNA stability and is required for the correct processing and maturation of mitochondrial transcripts. This Drosophila pseudoobscura pseudoobscura (Fruit fly) protein is ATP-dependent RNA helicase SUV3 homolog, mitochondrial.